Consider the following 184-residue polypeptide: Large ribosomal subunit protein uL18 (184 aa).

It belongs to the universal ribosomal protein uL18 family. As to quaternary structure, part of the 50S ribosomal subunit. Contacts the 5S and 23S rRNAs.

Functionally, this is one of the proteins that bind and probably mediate the attachment of the 5S RNA into the large ribosomal subunit, where it forms part of the central protuberance. The polypeptide is Large ribosomal subunit protein uL18 (rpl18) (Haloferax volcanii (strain ATCC 29605 / DSM 3757 / JCM 8879 / NBRC 14742 / NCIMB 2012 / VKM B-1768 / DS2) (Halobacterium volcanii)).